A 618-amino-acid chain; its full sequence is Proline--tRNA ligase (618 aa).

This sequence belongs to the class-II aminoacyl-tRNA synthetase family. ProS type 1 subfamily. As to quaternary structure, homodimer.

The protein resides in the cytoplasm. The catalysed reaction is tRNA(Pro) + L-proline + ATP = L-prolyl-tRNA(Pro) + AMP + diphosphate. Catalyzes the attachment of proline to tRNA(Pro) in a two-step reaction: proline is first activated by ATP to form Pro-AMP and then transferred to the acceptor end of tRNA(Pro). As ProRS can inadvertently accommodate and process non-cognate amino acids such as alanine and cysteine, to avoid such errors it has two additional distinct editing activities against alanine. One activity is designated as 'pretransfer' editing and involves the tRNA(Pro)-independent hydrolysis of activated Ala-AMP. The other activity is designated 'posttransfer' editing and involves deacylation of mischarged Ala-tRNA(Pro). The misacylated Cys-tRNA(Pro) is not edited by ProRS. This is Proline--tRNA ligase from Streptococcus pyogenes serotype M28 (strain MGAS6180).